A 1132-amino-acid polypeptide reads, in one-letter code: Phytochrome B (1132 aa).

Residues 1–11 (MASGSRTKHSH) show a composition bias toward basic residues. The tract at residues 1-27 (MASGSRTKHSHQSGQGQVQAQSSGTSN) is disordered. The span at 12–26 (QSGQGQVQAQSSGTS) shows a compositional bias: low complexity. Residues 231–409 (DVKLLCDTVV…AFGLQLNMEL (179 aa)) form the GAF domain. Cys-336 is a binding site for phytochromobilin. PAS domains follow at residues 623–694 (VARE…LRGE) and 757–828 (DYKA…MIVL). The region spanning 905–1125 (YLCQEIKSPL…LIILDLPMTR (221 aa)) is the Histidine kinase domain.

The protein belongs to the phytochrome family. As to quaternary structure, homodimer. Post-translationally, contains one covalently linked phytochromobilin chromophore.

Regulatory photoreceptor which exists in two forms that are reversibly interconvertible by light: the Pr form that absorbs maximally in the red region of the spectrum and the Pfr form that absorbs maximally in the far-red region. Photoconversion of Pr to Pfr induces an array of morphogenic responses, whereas reconversion of Pfr to Pr cancels the induction of those responses. Pfr controls the expression of a number of nuclear genes including those encoding the small subunit of ribulose-bisphosphate carboxylase, chlorophyll A/B binding protein, protochlorophyllide reductase, rRNA, etc. It also controls the expression of its own gene(s) in a negative feedback fashion. The sequence is that of Phytochrome B (PHYB) from Nicotiana tabacum (Common tobacco).